Reading from the N-terminus, the 345-residue chain is Holliday junction branch migration complex subunit RuvB (345 aa).

The tract at residues 4–194 is large ATPase domain (RuvB-L); it reads TDKLFGAAPE…FGIVARLEFY (191 aa). ATP is bound by residues L33, R34, G75, K78, T79, T80, 141–143, R184, Y194, and R231; that span reads EDY. T79 is a binding site for Mg(2+). Residues 195–265 form a small ATPAse domain (RuvB-S) region; sequence NAEELTRIVS…VADAALAMLD (71 aa). A head domain (RuvB-H) region spans residues 268-345; that stretch reads PAGLDVMDRK…LHFGLPVKDA (78 aa). DNA-binding residues include R323 and R328.

It belongs to the RuvB family. In terms of assembly, homohexamer. Forms an RuvA(8)-RuvB(12)-Holliday junction (HJ) complex. HJ DNA is sandwiched between 2 RuvA tetramers; dsDNA enters through RuvA and exits via RuvB. An RuvB hexamer assembles on each DNA strand where it exits the tetramer. Each RuvB hexamer is contacted by two RuvA subunits (via domain III) on 2 adjacent RuvB subunits; this complex drives branch migration. In the full resolvosome a probable DNA-RuvA(4)-RuvB(12)-RuvC(2) complex forms which resolves the HJ.

Its subcellular location is the cytoplasm. The enzyme catalyses ATP + H2O = ADP + phosphate + H(+). The RuvA-RuvB-RuvC complex processes Holliday junction (HJ) DNA during genetic recombination and DNA repair, while the RuvA-RuvB complex plays an important role in the rescue of blocked DNA replication forks via replication fork reversal (RFR). RuvA specifically binds to HJ cruciform DNA, conferring on it an open structure. The RuvB hexamer acts as an ATP-dependent pump, pulling dsDNA into and through the RuvAB complex. RuvB forms 2 homohexamers on either side of HJ DNA bound by 1 or 2 RuvA tetramers; 4 subunits per hexamer contact DNA at a time. Coordinated motions by a converter formed by DNA-disengaged RuvB subunits stimulates ATP hydrolysis and nucleotide exchange. Immobilization of the converter enables RuvB to convert the ATP-contained energy into a lever motion, pulling 2 nucleotides of DNA out of the RuvA tetramer per ATP hydrolyzed, thus driving DNA branch migration. The RuvB motors rotate together with the DNA substrate, which together with the progressing nucleotide cycle form the mechanistic basis for DNA recombination by continuous HJ branch migration. Branch migration allows RuvC to scan DNA until it finds its consensus sequence, where it cleaves and resolves cruciform DNA. The protein is Holliday junction branch migration complex subunit RuvB of Chromobacterium violaceum (strain ATCC 12472 / DSM 30191 / JCM 1249 / CCUG 213 / NBRC 12614 / NCIMB 9131 / NCTC 9757 / MK).